The chain runs to 62 residues: uncharacterized protein (62 aa).

This is an uncharacterized protein from Escherichia coli O157:H7.